Consider the following 146-residue polypeptide: UPF0310 protein YdcG (146 aa).

This sequence belongs to the UPF0310 family.

This Bacillus subtilis (strain 168) protein is UPF0310 protein YdcG (ydcG).